Here is a 514-residue protein sequence, read N- to C-terminus: Na(+)/H(+) antiporter NhaB (514 aa).

A run of 12 helical transmembrane segments spans residues 23–43 (LALLVFLIVNPFIFLANPFVA), 63–83 (PLLPGGLLAIEAVIIGMTSAA), 97–117 (LLLMFMVAGIYFMKQLLLFIF), 120–140 (LLLSIRSKMVLSLAFCVAAAF), 144–164 (FLDALTVVAVVISVAVGFYGI), 202–222 (LMMHAGVGTALGGVMTMVGEP), 238–258 (FFLRMSPVTVPVLVCGLLTCM), 303–323 (AVIGVWLVTALALHLAEVGLI), 357–377 (LTVFFSIVAVIIDQHLFAPII), 391–411 (LFYLFNGLLSSISDNVFVGTI), 447–467 (ATPNGQAAFLFLLTSALAPLI), and 475–495 (VWMALPYTIVLTLIGLLCVEF).

Belongs to the NhaB Na(+)/H(+) (TC 2.A.34) antiporter family.

Its subcellular location is the cell inner membrane. The enzyme catalyses 2 Na(+)(in) + 3 H(+)(out) = 2 Na(+)(out) + 3 H(+)(in). Na(+)/H(+) antiporter that extrudes sodium in exchange for external protons. The polypeptide is Na(+)/H(+) antiporter NhaB (Salmonella agona (strain SL483)).